We begin with the raw amino-acid sequence, 295 residues long: MSEKQVKYPWWYGGAAGIFAVMNTHPLDLTKVRLQAAPIPKPTIVQMLRSILKNEGIVGLYAGLSASLLRQCTYTTARFGMYDALKEHVIPRDKLTNMWYLLGASMVSGALGGLAGNFADLINIRMQNDSALPLDKRRNYKNAIDGMVKIYKAEGAKSLFLTGWKPNMVRGVLMTASQVVTYDMFKNFLVTKYNMDPKKNSTHLTSSLLAGFVATTVCSPADVIKTIVMNAHKKPGHNHDSSFKILMEAINKEGPSFMFRGWVPSFTRLAPFTMLIFFAMEQLKKYRVGMPKEEA.

3 Solcar repeats span residues 4–88 (KQVK…LKEH), 96–188 (TNMW…FKNF), and 198–286 (KKNS…LKKY). The next 6 helical transmembrane spans lie at 8 to 24 (YPWWYGGAAGIFAVMNT), 63 to 82 (GLSASLLRQCTYTTARFGMY), 98 to 122 (MWYLLGASMVSGALGGLAGNFADLI), 163 to 182 (GWKPNMVRGVLMTASQVVTY), 204 to 224 (LTSSLLAGFVATTVCSPADVI), and 262 to 280 (WVPSFTRLAPFTMLIFFAM).

This sequence belongs to the mitochondrial carrier (TC 2.A.29) family. Homodimer.

It localises to the mitochondrion inner membrane. Mitochondrial dicarboxylic transporter catalyzing the exchange of dicarboxylic acids like malate and succinate for inorganic phosphate. Required for growth on ethanol and acetate. The chain is Mitochondrial dicarboxylate transporter (DIC1) from Candida glabrata (strain ATCC 2001 / BCRC 20586 / JCM 3761 / NBRC 0622 / NRRL Y-65 / CBS 138) (Yeast).